Reading from the N-terminus, the 60-residue chain is Homeobox protein EgHBX4 (60 aa).

Positions 1 to 60 (SRRERTIYTPEQLEAMEEVFGVNRYPDVSMREELASRLGINESKIQVWFKNRRAKLRNLE) form a DNA-binding region, homeobox.

This sequence belongs to the paired homeobox family. Bicoid subfamily.

The protein localises to the nucleus. This chain is Homeobox protein EgHBX4 (HBX4), found in Echinococcus granulosus (Hydatid tapeworm).